A 218-amino-acid polypeptide reads, in one-letter code: Peptide methionine sulfoxide reductase MsrA (218 aa).

Cys-57 is an active-site residue.

This sequence belongs to the MsrA Met sulfoxide reductase family.

It carries out the reaction L-methionyl-[protein] + [thioredoxin]-disulfide + H2O = L-methionyl-(S)-S-oxide-[protein] + [thioredoxin]-dithiol. The enzyme catalyses [thioredoxin]-disulfide + L-methionine + H2O = L-methionine (S)-S-oxide + [thioredoxin]-dithiol. Its function is as follows. Has an important function as a repair enzyme for proteins that have been inactivated by oxidation. Catalyzes the reversible oxidation-reduction of methionine sulfoxide in proteins to methionine. In Brucella suis biovar 1 (strain 1330), this protein is Peptide methionine sulfoxide reductase MsrA.